We begin with the raw amino-acid sequence, 906 residues long: Protein translocase subunit SecA (906 aa).

ATP is bound by residues Q86, 104–108 (GEGKT), and D499. A disordered region spans residues 862–886 (KPVVSRIDPKDRNPDDPTSWGRVSR). Zn(2+) contacts are provided by C890, C892, C901, and H902.

This sequence belongs to the SecA family. In terms of assembly, monomer and homodimer. Part of the essential Sec protein translocation apparatus which comprises SecA, SecYEG and auxiliary proteins SecDF-YajC and YidC. Zn(2+) is required as a cofactor.

It localises to the cell inner membrane. Its subcellular location is the cytoplasm. It carries out the reaction ATP + H2O + cellular proteinSide 1 = ADP + phosphate + cellular proteinSide 2.. In terms of biological role, part of the Sec protein translocase complex. Interacts with the SecYEG preprotein conducting channel. Has a central role in coupling the hydrolysis of ATP to the transfer of proteins into and across the cell membrane, serving both as a receptor for the preprotein-SecB complex and as an ATP-driven molecular motor driving the stepwise translocation of polypeptide chains across the membrane. The chain is Protein translocase subunit SecA from Rickettsia africae (strain ESF-5).